The primary structure comprises 160 residues: NADH-quinone oxidoreductase subunit B (160 aa).

Positions 37, 38, 102, and 132 each coordinate [4Fe-4S] cluster.

Belongs to the complex I 20 kDa subunit family. As to quaternary structure, NDH-1 is composed of 14 different subunits. Subunits NuoB, C, D, E, F, and G constitute the peripheral sector of the complex. Requires [4Fe-4S] cluster as cofactor.

It is found in the cell inner membrane. It catalyses the reaction a quinone + NADH + 5 H(+)(in) = a quinol + NAD(+) + 4 H(+)(out). NDH-1 shuttles electrons from NADH, via FMN and iron-sulfur (Fe-S) centers, to quinones in the respiratory chain. Couples the redox reaction to proton translocation (for every two electrons transferred, four hydrogen ions are translocated across the cytoplasmic membrane), and thus conserves the redox energy in a proton gradient. This chain is NADH-quinone oxidoreductase subunit B, found in Cupriavidus metallidurans (strain ATCC 43123 / DSM 2839 / NBRC 102507 / CH34) (Ralstonia metallidurans).